We begin with the raw amino-acid sequence, 281 residues long: Fructose-bisphosphate aldolase class 1 (281 aa).

Lysine 191 serves as the catalytic Schiff-base intermediate with dihydroxyacetone-P.

The protein belongs to the DeoC/FbaB aldolase family. As to quaternary structure, homooctamer.

The protein localises to the cytoplasm. It carries out the reaction beta-D-fructose 1,6-bisphosphate = D-glyceraldehyde 3-phosphate + dihydroxyacetone phosphate. With respect to regulation, activated by citrate. The chain is Fructose-bisphosphate aldolase class 1 (fba) from Pyrococcus furiosus (strain ATCC 43587 / DSM 3638 / JCM 8422 / Vc1).